We begin with the raw amino-acid sequence, 155 residues long: WPP domain-containing protein 1 (155 aa).

Disordered regions lie at residues 1–41 and 124–155; these read MAET…VTIS and SVKAKSNVASPPPKDGDGIESAVDSKIDSSEA. The segment covering 7–39 has biased composition (low complexity); sequence ESITTSSPPPISETENSTTLPTTETEKNPNPVT. Positions 28–131 are WPP; that stretch reads TTETEKNPNP…LESVKAKSNV (104 aa). A compositionally biased stretch (basic and acidic residues) spans 146–155; the sequence is VDSKIDSSEA.

In terms of assembly, binds to FPP proteins. Interacts with WAP, WIP1, WIP2 and WIP3 through its WPP domain. Interacts with HSP70-1, HSP70-3 and WIT1. Component of a ternary complex composed of WPP1, HSP70-1 and WIT1. In terms of tissue distribution, expressed in roots, stems and leaves.

The protein localises to the nucleus envelope. It localises to the cytoplasm. It is found in the nucleus. The protein resides in the golgi apparatus. Its subcellular location is the nucleus matrix. Regulates the mitotic activity in roots. Plays a role with HSP70-1 in facilitating WIT1 nuclear envelope targeting. The sequence is that of WPP domain-containing protein 1 (WPP1) from Arabidopsis thaliana (Mouse-ear cress).